Here is a 681-residue protein sequence, read N- to C-terminus: Probable L-type lectin-domain containing receptor kinase VII.2 (681 aa).

The N-terminal stretch at 1–23 (MFSKVSILLFSLASLLLFRSTTG) is a signal peptide. The segment at 24–260 (IEFIYNSNFT…SHRILSWSFS (237 aa)) is legume-lectin like. Residues 24–290 (IEFIYNSNFT…SGDSVLKSKG (267 aa)) are Extracellular-facing. Asparagine 31, asparagine 42, asparagine 56, asparagine 72, asparagine 126, asparagine 202, asparagine 207, asparagine 228, and asparagine 263 each carry an N-linked (GlcNAc...) asparagine glycan. Residues 291 to 311 (FIAGVSSGVVLLVSVIGLLCF) form a helical membrane-spanning segment. Residues 312–681 (YVVRRRRQRL…QTYDSILHGR (370 aa)) are Cytoplasmic-facing. One can recognise a Protein kinase domain in the interval 349 to 624 (FSDENMIGYG…VVQILEQGRL (276 aa)). ATP is bound by residues 355–363 (IGYGGNSKV) and lysine 376. The Proton acceptor role is filled by aspartate 475.

It in the C-terminal section; belongs to the protein kinase superfamily. Ser/Thr protein kinase family. This sequence in the N-terminal section; belongs to the leguminous lectin family.

Its subcellular location is the cell membrane. It catalyses the reaction L-seryl-[protein] + ATP = O-phospho-L-seryl-[protein] + ADP + H(+). The enzyme catalyses L-threonyl-[protein] + ATP = O-phospho-L-threonyl-[protein] + ADP + H(+). This chain is Probable L-type lectin-domain containing receptor kinase VII.2 (LECRK72), found in Arabidopsis thaliana (Mouse-ear cress).